The following is a 744-amino-acid chain: Dolasta-1(15),8-diene synthase (744 aa).

The segment at 1–344 (MASTMMNYQD…RRYNPAAPLP (344 aa)) is terpene cyclase. Residues Asp-108 and Asp-112 each coordinate Mg(2+). Substrate is bound by residues Asp-108, Asp-112, 198-201 (RHYD), 246-250 (SWDKE), and 336-337 (RY). Residues 108–112 (DDLTD) carry the DDXXD motif. A prenyltransferase region spans residues 345 to 744 (RREDIGKVNG…LHLITFQLKV (400 aa)). Residues 399–422 (YTTMTPAETSSDDKKKKAKASHET) are disordered. Over residues 409–422 (SDDKKKKAKASHET) the composition is skewed to basic and acidic residues. Arg-459 and His-488 together coordinate isopentenyl diphosphate. Residues Asp-495 and Asp-499 each coordinate Mg(2+). The short motif at 495–499 (DDVQD) is the DDXXD element. Dimethylallyl diphosphate is bound at residue Arg-504. Isopentenyl diphosphate is bound at residue Arg-505. 3 residues coordinate dimethylallyl diphosphate: Lys-581, Thr-582, and Gln-617.

This sequence in the N-terminal section; belongs to the terpene synthase family. The protein in the C-terminal section; belongs to the FPP/GGPP synthase family. In terms of assembly, hexamer. It depends on Mg(2+) as a cofactor.

It catalyses the reaction isopentenyl diphosphate + (2E,6E)-farnesyl diphosphate = (2E,6E,10E)-geranylgeranyl diphosphate + diphosphate. The catalysed reaction is (2E,6E,10E)-geranylgeranyl diphosphate = (5R,12R,14S)-dolasta-1(15),8-diene + diphosphate. It carries out the reaction (2E,6E,10E)-geranylgeranyl diphosphate = delta-araneosene + diphosphate. Its function is as follows. Bifunctional terpene synthase involved in the biosynthesis of the diterpenes delta-araneosene and dolasta-1(15),8-diene. The C-terminal prenyltransferase domain of CgDS catalyzes formation of the universal precursor of diterpene, geranylgeranyl diphosphate (GGPP), whereas the N-terminal terpene cyclase domain catalyzes the cyclization of GGPP to the intermediate delta-araneosene that is further converted to dolasta-1(15),8-diene in a second cyclization event. In some cases the cyclization stops at the delta-araneosene stage. The sequence is that of Dolasta-1(15),8-diene synthase from Colletotrichum gloeosporioides (Anthracnose fungus).